A 69-amino-acid chain; its full sequence is Cytochrome c oxidase subunit 8A, mitochondrial (69 aa).

The transit peptide at 1-25 (MSVLTPLLLRGLTGSARRLPVPRAQ) directs the protein to the mitochondrion. An SIFI-degron motif is present at residues 2-19 (SVLTPLLLRGLTGSARRL). Residues 26-36 (VHSMPPEQKLG) are Mitochondrial matrix-facing. A helical membrane pass occupies residues 37–60 (VLELAIGFTSCLVTFLLPAGWILS). Residues 61–69 (HLDSYKKRG) lie on the Mitochondrial intermembrane side of the membrane.

Belongs to the cytochrome c oxidase VIII family. As to quaternary structure, component of the cytochrome c oxidase (complex IV, CIV), a multisubunit enzyme composed of 14 subunits. The complex is composed of a catalytic core of 3 subunits MT-CO1, MT-CO2 and MT-CO3, encoded in the mitochondrial DNA, and 11 supernumerary subunits COX4I, COX5A, COX5B, COX6A, COX6B, COX6C, COX7A, COX7B, COX7C, COX8 and NDUFA4, which are encoded in the nuclear genome. The complex exists as a monomer or a dimer and forms supercomplexes (SCs) in the inner mitochondrial membrane with NADH-ubiquinone oxidoreductase (complex I, CI) and ubiquinol-cytochrome c oxidoreductase (cytochrome b-c1 complex, complex III, CIII), resulting in different assemblies (supercomplex SCI(1)III(2)IV(1) and megacomplex MCI(2)III(2)IV(2)). In terms of processing, in response to mitochondrial stress, the precursor protein is ubiquitinated by the SIFI complex in the cytoplasm before mitochondrial import, leading to its degradation. Within the SIFI complex, UBR4 initiates ubiquitin chain that are further elongated or branched by KCMF1.

It is found in the mitochondrion inner membrane. The protein operates within energy metabolism; oxidative phosphorylation. In terms of biological role, component of the cytochrome c oxidase, the last enzyme in the mitochondrial electron transport chain which drives oxidative phosphorylation. The respiratory chain contains 3 multisubunit complexes succinate dehydrogenase (complex II, CII), ubiquinol-cytochrome c oxidoreductase (cytochrome b-c1 complex, complex III, CIII) and cytochrome c oxidase (complex IV, CIV), that cooperate to transfer electrons derived from NADH and succinate to molecular oxygen, creating an electrochemical gradient over the inner membrane that drives transmembrane transport and the ATP synthase. Cytochrome c oxidase is the component of the respiratory chain that catalyzes the reduction of oxygen to water. Electrons originating from reduced cytochrome c in the intermembrane space (IMS) are transferred via the dinuclear copper A center (CU(A)) of subunit 2 and heme A of subunit 1 to the active site in subunit 1, a binuclear center (BNC) formed by heme A3 and copper B (CU(B)). The BNC reduces molecular oxygen to 2 water molecules using 4 electrons from cytochrome c in the IMS and 4 protons from the mitochondrial matrix. The polypeptide is Cytochrome c oxidase subunit 8A, mitochondrial (COX8A) (Saimiri sciureus (Common squirrel monkey)).